The sequence spans 506 residues: Histidine ammonia-lyase (506 aa).

A cross-link (5-imidazolinone (Ala-Gly)) is located at residues 143–145; the sequence is ASG. 2,3-didehydroalanine (Ser) is present on Ser-144.

This sequence belongs to the PAL/histidase family. Contains an active site 4-methylidene-imidazol-5-one (MIO), which is formed autocatalytically by cyclization and dehydration of residues Ala-Ser-Gly.

Its subcellular location is the cytoplasm. The catalysed reaction is L-histidine = trans-urocanate + NH4(+). Its pathway is amino-acid degradation; L-histidine degradation into L-glutamate; N-formimidoyl-L-glutamate from L-histidine: step 1/3. This chain is Histidine ammonia-lyase, found in Salmonella typhimurium (strain LT2 / SGSC1412 / ATCC 700720).